A 364-amino-acid chain; its full sequence is Selenide, water dikinase (364 aa).

Residue Sec-25 is part of the active site. A non-standard amino acid (selenocysteine) is located at residue Sec-25. ATP is bound by residues Lys-28, Gly-46–Asp-48, Asp-66, Asp-89, and Gly-141–Thr-143. Asp-48 provides a ligand contact to Mg(2+). Position 89 (Asp-89) interacts with Mg(2+). Position 244 (Asp-244) interacts with Mg(2+).

Belongs to the selenophosphate synthase 1 family. Class II subfamily. Homodimer. The cofactor is Mg(2+).

The catalysed reaction is hydrogenselenide + ATP + H2O = selenophosphate + AMP + phosphate + 2 H(+). Synthesizes selenophosphate from selenide and ATP. This is Selenide, water dikinase (selD) from Dictyostelium discoideum (Social amoeba).